Here is a 361-residue protein sequence, read N- to C-terminus: tRNA-specific 2-thiouridylase MnmA (361 aa).

Residues 6–13 (LVSGGVDS) and Ile32 contribute to the ATP site. An interaction with target base in tRNA region spans residues 93 to 95 (NPD). The active-site Nucleophile is the Cys98. Residues Cys98 and Cys193 are joined by a disulfide bond. Gly121 serves as a coordination point for ATP. The tract at residues 143–145 (KDQ) is interaction with tRNA. Catalysis depends on Cys193, which acts as the Cysteine persulfide intermediate.

This sequence belongs to the MnmA/TRMU family.

The protein localises to the cytoplasm. The catalysed reaction is S-sulfanyl-L-cysteinyl-[protein] + uridine(34) in tRNA + AH2 + ATP = 2-thiouridine(34) in tRNA + L-cysteinyl-[protein] + A + AMP + diphosphate + H(+). Its function is as follows. Catalyzes the 2-thiolation of uridine at the wobble position (U34) of tRNA, leading to the formation of s(2)U34. The protein is tRNA-specific 2-thiouridylase MnmA of Porphyromonas gingivalis (strain ATCC BAA-308 / W83).